The following is a 74-amino-acid chain: Guanine nucleotide-binding protein G(T) subunit gamma-T1 (74 aa).

Cys-71 carries the cysteine methyl ester modification. Residue Cys-71 is the site of S-farnesyl cysteine attachment. Residues 72 to 74 (VIS) constitute a propeptide, removed in mature form.

The protein belongs to the G protein gamma family. In terms of assembly, g proteins are composed of 3 units, alpha, beta and gamma. In terms of tissue distribution, retinal rod outer segment.

It is found in the cell membrane. Functionally, guanine nucleotide-binding proteins (G proteins) are involved as a modulator or transducer in various transmembrane signaling systems. The beta and gamma chains are required for the GTPase activity, for replacement of GDP by GTP, and for G protein-effector interaction. This Bos taurus (Bovine) protein is Guanine nucleotide-binding protein G(T) subunit gamma-T1 (GNGT1).